A 201-amino-acid chain; its full sequence is MLLSDRDIKAELTAGRLGLEPFEQGMIQPSSVDVRLDRFFRLFDNHKYPFIDPAEDQPDLTRFVEVVADQPFILHPGEFVLGSTFELVSLPDDVAARLEGKSSLGRLGLLTHSTAGFIDPGFSGHVTLELSNVATLPIKLWPGMKIGQMCFFRLSSAAEKPYGSAEYSSRYQGQRGPTASRSFLNFHRTDVSGTEAGRSSS.

Residues 101 to 106 (KSSLGR), Asp-119, 127 to 129 (TLE), Gln-148, Tyr-162, and Gln-174 each bind dCTP. Glu-129 acts as the Proton donor/acceptor in catalysis. Residues 166 to 183 (EYSSRYQGQRGPTASRSF) are compositionally biased toward polar residues. A disordered region spans residues 166–201 (EYSSRYQGQRGPTASRSFLNFHRTDVSGTEAGRSSS).

Belongs to the dCTP deaminase family. Homotrimer.

The enzyme catalyses dCTP + 2 H2O = dUMP + NH4(+) + diphosphate. Its pathway is pyrimidine metabolism; dUMP biosynthesis; dUMP from dCTP: step 1/1. In terms of biological role, bifunctional enzyme that catalyzes both the deamination of dCTP to dUTP and the hydrolysis of dUTP to dUMP without releasing the toxic dUTP intermediate. This Leifsonia xyli subsp. xyli (strain CTCB07) protein is dCTP deaminase, dUMP-forming.